A 176-amino-acid polypeptide reads, in one-letter code: Small ribosomal subunit protein uS5 (176 aa).

The region spanning 11–74 (LSEVLVDVNR…QAAKKRMMKV (64 aa)) is the S5 DRBM domain.

It belongs to the universal ribosomal protein uS5 family. Part of the 30S ribosomal subunit. Contacts proteins S4 and S8.

Its function is as follows. With S4 and S12 plays an important role in translational accuracy. Located at the back of the 30S subunit body where it stabilizes the conformation of the head with respect to the body. The protein is Small ribosomal subunit protein uS5 of Rickettsia africae (strain ESF-5).